Here is a 749-residue protein sequence, read N- to C-terminus: DNA topoisomerase 1 (749 aa).

The tract at residues 1-110 is disordered; that stretch reads MSDSEDVALS…PKKEDSVETD (110 aa). Residues 62-75 show a composition bias toward basic and acidic residues; sequence LSKEKVNNKVKDEL. The segment covering 79–94 has biased composition (low complexity); the sequence is PVTPKKTPKISKTPVS. The segment covering 101–110 has biased composition (basic and acidic residues); the sequence is PKKEDSVETD. Interaction with DNA regions lie at residues 338–339, 401–406, and 493–495; these read KY, RAGGEK, and TAK. The 405-residue stretch at 345 to 749 folds into the Topo IB-type catalytic domain; it reads NSSIKGISDM…IESTDENWRF (405 aa). The active-site O-(3'-phospho-DNA)-tyrosine intermediate is tyrosine 707.

Belongs to the type IB topoisomerase family.

Its subcellular location is the nucleus. It localises to the nucleolus. It is found in the nucleoplasm. It carries out the reaction ATP-independent breakage of single-stranded DNA, followed by passage and rejoining.. Functionally, releases the supercoiling and torsional tension of DNA introduced during the DNA replication and transcription by transiently cleaving and rejoining one strand of the DNA duplex. Introduces a single-strand break via transesterification at the specific target site 5'-[CT]CCTTp site in duplex DNA. The scissile phosphodiester is attacked by the catalytic tyrosine of the enzyme, resulting in the formation of a DNA-(3'-phosphotyrosyl)-enzyme intermediate and the expulsion of a 5'-OH DNA strand. The free DNA strand then undergoes passage around the unbroken strand thus removing DNA supercoils. Finally, in the religation step, the DNA 5'-OH attacks the covalent intermediate to expel the active-site tyrosine and restore the DNA phosphodiester backbone. In Candidozyma auris (Yeast), this protein is DNA topoisomerase 1 (TOP1).